Reading from the N-terminus, the 278-residue chain is Keratin-associated protein 5-1 (278 aa).

A run of 8 repeats spans residues 42 to 45 (CCVP), 48 to 51 (CCKP), 130 to 133 (CCVP), 136 to 139 (CCKP), 142 to 145 (CCVP), 239 to 242 (CCKP), 258 to 261 (CCKP), and 268 to 271 (CCVP). Positions 42–271 (CCVPVCCCKP…CCSQSSCCVP (230 aa)) are 8 X 4 AA repeats of C-C-X-P.

Belongs to the KRTAP type 5 family. Interacts with hair keratins. In terms of tissue distribution, expressed in hair root but not in skin. Expressed also in lung, pancreas, ovary, testis.

In the hair cortex, hair keratin intermediate filaments are embedded in an interfilamentous matrix, consisting of hair keratin-associated protein (KRTAP), which are essential for the formation of a rigid and resistant hair shaft through their extensive disulfide bond cross-linking with abundant cysteine residues of hair keratins. The matrix proteins include the high-sulfur and high-glycine-tyrosine keratins. This chain is Keratin-associated protein 5-1 (KRTAP5-1), found in Homo sapiens (Human).